A 446-amino-acid chain; its full sequence is 3-phosphoshikimate 1-carboxyvinyltransferase (446 aa).

Residues Lys35, Ser36, and Arg40 each coordinate 3-phosphoshikimate. Position 35 (Lys35) interacts with phosphoenolpyruvate. Phosphoenolpyruvate is bound by residues Gly108 and Arg137. Ser182, Gln184, Asp332, and Lys359 together coordinate 3-phosphoshikimate. Gln184 lines the phosphoenolpyruvate pocket. The Proton acceptor role is filled by Asp332. Arg363 and Arg405 together coordinate phosphoenolpyruvate.

It belongs to the EPSP synthase family. In terms of assembly, monomer.

It is found in the cytoplasm. It carries out the reaction 3-phosphoshikimate + phosphoenolpyruvate = 5-O-(1-carboxyvinyl)-3-phosphoshikimate + phosphate. It functions in the pathway metabolic intermediate biosynthesis; chorismate biosynthesis; chorismate from D-erythrose 4-phosphate and phosphoenolpyruvate: step 6/7. Its function is as follows. Catalyzes the transfer of the enolpyruvyl moiety of phosphoenolpyruvate (PEP) to the 5-hydroxyl of shikimate-3-phosphate (S3P) to produce enolpyruvyl shikimate-3-phosphate and inorganic phosphate. The sequence is that of 3-phosphoshikimate 1-carboxyvinyltransferase from Acaryochloris marina (strain MBIC 11017).